A 126-amino-acid chain; its full sequence is Holo-[acyl-carrier-protein] synthase (126 aa).

The Mg(2+) site is built by aspartate 9 and glutamate 58.

Belongs to the P-Pant transferase superfamily. AcpS family. Requires Mg(2+) as cofactor.

Its subcellular location is the cytoplasm. It catalyses the reaction apo-[ACP] + CoA = holo-[ACP] + adenosine 3',5'-bisphosphate + H(+). Its function is as follows. Transfers the 4'-phosphopantetheine moiety from coenzyme A to a Ser of acyl-carrier-protein. The chain is Holo-[acyl-carrier-protein] synthase from Vibrio vulnificus (strain CMCP6).